Here is a 416-residue protein sequence, read N- to C-terminus: Tyrosine--tRNA ligase (416 aa).

Residue Y40 participates in L-tyrosine binding. A 'HIGH' region motif is present at residues 45-54 (ATAASLHVGH). L-tyrosine contacts are provided by Y177 and Q181. A 'KMSKS' region motif is present at residues 237-241 (KMGKS). K240 contributes to the ATP binding site. One can recognise an S4 RNA-binding domain in the interval 351-416 (LSVAHFLVAA…RKKHKLVRLS (66 aa)).

It belongs to the class-I aminoacyl-tRNA synthetase family. TyrS type 1 subfamily. In terms of assembly, homodimer.

The protein resides in the cytoplasm. It catalyses the reaction tRNA(Tyr) + L-tyrosine + ATP = L-tyrosyl-tRNA(Tyr) + AMP + diphosphate + H(+). Its function is as follows. Catalyzes the attachment of tyrosine to tRNA(Tyr) in a two-step reaction: tyrosine is first activated by ATP to form Tyr-AMP and then transferred to the acceptor end of tRNA(Tyr). The chain is Tyrosine--tRNA ligase from Cereibacter sphaeroides (strain KD131 / KCTC 12085) (Rhodobacter sphaeroides).